Reading from the N-terminus, the 232-residue chain is Phosphatidylserine decarboxylase proenzyme (232 aa).

Catalysis depends on Ser190, which acts as the Schiff-base intermediate with substrate; via pyruvic acid. Pyruvic acid (Ser); by autocatalysis is present on Ser190.

This sequence belongs to the phosphatidylserine decarboxylase family. PSD-A subfamily. As to quaternary structure, heterodimer of a large membrane-associated beta subunit and a small pyruvoyl-containing alpha subunit. The cofactor is pyruvate. In terms of processing, is synthesized initially as an inactive proenzyme. Formation of the active enzyme involves a self-maturation process in which the active site pyruvoyl group is generated from an internal serine residue via an autocatalytic post-translational modification. Two non-identical subunits are generated from the proenzyme in this reaction, and the pyruvate is formed at the N-terminus of the alpha chain, which is derived from the carboxyl end of the proenzyme. The post-translation cleavage follows an unusual pathway, termed non-hydrolytic serinolysis, in which the side chain hydroxyl group of the serine supplies its oxygen atom to form the C-terminus of the beta chain, while the remainder of the serine residue undergoes an oxidative deamination to produce ammonia and the pyruvoyl prosthetic group on the alpha chain.

It is found in the cell membrane. The catalysed reaction is a 1,2-diacyl-sn-glycero-3-phospho-L-serine + H(+) = a 1,2-diacyl-sn-glycero-3-phosphoethanolamine + CO2. It participates in phospholipid metabolism; phosphatidylethanolamine biosynthesis; phosphatidylethanolamine from CDP-diacylglycerol: step 2/2. In terms of biological role, catalyzes the formation of phosphatidylethanolamine (PtdEtn) from phosphatidylserine (PtdSer). This is Phosphatidylserine decarboxylase proenzyme from Brucella canis (strain ATCC 23365 / NCTC 10854 / RM-666).